A 361-amino-acid chain; its full sequence is 24-methylenesterol C-methyltransferase 2 (361 aa).

This sequence belongs to the class I-like SAM-binding methyltransferase superfamily. Erg6/SMT family.

The enzyme catalyses 24-methylidenelophenol + S-adenosyl-L-methionine = (Z)-24-ethylidenelophenol + S-adenosyl-L-homocysteine + H(+). Its pathway is steroid biosynthesis; sterol biosynthesis. Catalyzes the methyl transfer from S-adenosyl-methionine to the methylene group of 24-methylene lophenol to form 24-ethylidene lophenol. The chain is 24-methylenesterol C-methyltransferase 2 (SMT2) from Arabidopsis thaliana (Mouse-ear cress).